The sequence spans 356 residues: S-adenosylmethionine:tRNA ribosyltransferase-isomerase (356 aa).

The protein belongs to the QueA family. Monomer.

The protein resides in the cytoplasm. It catalyses the reaction 7-aminomethyl-7-carbaguanosine(34) in tRNA + S-adenosyl-L-methionine = epoxyqueuosine(34) in tRNA + adenine + L-methionine + 2 H(+). The protein operates within tRNA modification; tRNA-queuosine biosynthesis. In terms of biological role, transfers and isomerizes the ribose moiety from AdoMet to the 7-aminomethyl group of 7-deazaguanine (preQ1-tRNA) to give epoxyqueuosine (oQ-tRNA). This chain is S-adenosylmethionine:tRNA ribosyltransferase-isomerase, found in Escherichia coli O8 (strain IAI1).